We begin with the raw amino-acid sequence, 429 residues long: MALDQRWDRFLVSWFGLDEAQLTAHRVFEGENGVPVEEYVAFVIFGERGFQGNMPSWARHLLDRPSLAQAIAVLRAGSDTVAKQAQICAAQQLLGAHVWVVVTLSRAQAADHARAIPRHVWAKYLSLPFSKACAQLCKLLALCSRFPLVTCCSKPPPSLPWLRKKWHGPLPRRPLLEVPSPTRRGVAATEDGNGLGIGAADTGLREALERVAPTVPCGNPFDAMLGSLCFLSLIKSRHVVLPACEQEGPGLVRNLGRRLLAYNVLSPCVSIPVICSRVARAALAKRARCARAVVCMECGHCLNFGRGKFHTVNFPPTNVFFSRDRKEKQFTICATTGRIYCSYCGSEHMRVYPLCDITGRGTLARVVIRAVLANNAALAIRDLDQTVSFVVPCLGTPDCEAALLKHRDVRGLLQLTSQLLEFCCGKCSS.

Belongs to the herpesviridae UL49 family. Interacts with ORF34.

It localises to the host nucleus. It is found in the host cytoplasm. Functionally, participates in the expression of late viral mRNAs. The protein is Protein ORF66 (ORF66) of Homo sapiens (Human).